The following is a 490-amino-acid chain: Cytochrome P450 monooxygenase anuE (490 aa).

Residue cysteine 405 participates in heme binding.

Belongs to the cytochrome P450 family. Heme serves as cofactor.

It catalyses the reaction 2-hydroxymethyl-3-pentylphenol + reduced [NADPH--hemoprotein reductase] + O2 = (8S)-annullatin E + oxidized [NADPH--hemoprotein reductase] + H2O + H(+). It functions in the pathway secondary metabolite biosynthesis. Functionally, cytochrome P450 monooxygenase; part of the gene cluster that mediates the biosynthesis of annullatin D, an alkylated aromatic polyketide with a fused dihydrobenzofuran lactone ring system that exhibits potent agonistic activities toward the cannabinoid receptors. Within the pathway, anuE catalyzes the hydroxylation of 2-hydroxymethyl-3-pentylphenol at the side chain to produce (8S)-annullatin E. The annullatin backbone 2-hydroxymethyl-3-pentylphenol is assembled from one acetyl-CoA starter unit and 5 malonyl-CoA elongation units by cooperation of the highly reducing polyketide synthase anuA, the short-chain dehydrogenase anuB and the oxidoreductase anuC, before being hydroxylated at the C-5 alkyl chain by the cytochrome P450 monooxygenase anuE to form (8S)-annullatin E. The prenyltransferase anuH subsequently installs one isoprenyl group at the benzene ring to form (8S)-annullatin J. Enzymatic or nonenzymatic dihydro-benzofuran ring formation between the prenyl and the phenolic hydroxyl groups in (8S)-annullatin J results in two diastereomers (2S,9S)-annullatin H and compound 12. The intermediate (2S,9S)-annullatin H is then converted to (2S,9S)-annullatin D by the FAD-linked oxidoreductase anuG-catalyzed five-member lactone ring formation. The isomer 12 acts as a substrate for the short-chain dehydrogenase anuF and is oxidized to (2R)-annullatin F, which is subsequently acetylated by an acetyltransferase leading to (2R)-annullatin G formation. The remaining enzymes identified within the cluster, anuD, anuI and anuJ, seem not to be involved in annullatin biosynthesis. This Penicillium roqueforti (strain FM164) protein is Cytochrome P450 monooxygenase anuE.